We begin with the raw amino-acid sequence, 1048 residues long: [F-actin]-monooxygenase MICAL1 (1048 aa).

Positions 1–489 are monooxygenase domain; the sequence is MASPASTNPA…QDLYDMMDKE (489 aa). FAD is bound by residues Cys-95, 114-116, 121-123, Phe-181, Tyr-293, and Asp-393; these read EKR and RHN. Thr-475 carries the phosphothreonine modification. Basic and acidic residues predominate over residues 488 to 502; that stretch reads KEHAQRKSDEPDSRK. Residues 488 to 508 form a disordered region; sequence KEHAQRKSDEPDSRKTTTGSA. The region spanning 507–611 is the Calponin-homology (CH) domain; that stretch reads SAGTEELLHW…YLSHFHSAFK (105 aa). Position 616 is a phosphoserine (Ser-616). The disordered stretch occupies residues 643-676; it reads TRAKVDEETPSTEEPPVSEPSMSPNTPELSEHQE. The span at 654 to 666 shows a compositional bias: low complexity; that stretch reads TEEPPVSEPSMSP. An LIM zinc-binding domain is found at 681-743; that stretch reads ELCELCGKHL…LQHLPQEDQK (63 aa). Zn(2+)-binding residues include Cys-683, Cys-686, His-704, Cys-707, Cys-710, Cys-713, Cys-733, and His-736. 3 disordered regions span residues 741-787, 805-825, and 839-873; these read DQKE…QPAR, IIPD…SDLA, and PVQA…PPLE. Positions 747–765 are enriched in polar residues; the sequence is NNGSLESQELPTPGDSNMQ. Positions 772–787 are enriched in low complexity; that stretch reads PVTRVSPVPSPSQPAR. Residues Ser-777 and Ser-781 each carry the phosphoserine modification. Coiled coils occupy residues 847–867, 906–949, and 974–1031; these read EAIE…EEEE, EEEM…ESSS, and EEAE…VNQR. The span at 852 to 868 shows a compositional bias: acidic residues; that stretch reads GDDEEEEEEEEEEEEEP. One can recognise a bMERB domain in the interval 905–1048; it reads KEEEMKRFCK…EERRLREMPA (144 aa).

This sequence belongs to the Mical family. In terms of assembly, associates with the SH3 domain of NEDD9. Interacts with VIM and PLXNA3. Interacts with RAB1B, RAB8A, RAB10, RAB13 and RAB15 (in their GTP-bound forms); binding to RAB1B is of low affinity compared to other Rab proteins; at least in case of RAB8A and RAB10 can bind 2 molecules of the Rab proteins simultaneously. Interacts with STK38 and STK38L. Interacts with GRAF1/ARHGAP26, GRAF2/ARHGAP10, RAB8A, RAB8B and RAB10; may bind simultaneously to GRAFs and Rabs and connects GRAFs to Rabs. Does not interact with RAB1 and RAB11A. The cofactor is FAD. Expressed in the postnatal and adult hippocampus; found in dentate gyrus, the polymorphic layer, cornu ammonis (CA) 1-3 and in mossy fibers of the striatum lucidum. In adult hippocampus strongly expressed in CA3 pyramidial neurons.

The protein resides in the cytoplasm. It localises to the cytoskeleton. It is found in the endosome membrane. The protein localises to the midbody. It carries out the reaction L-methionyl-[F-actin] + NADPH + O2 + H(+) = L-methionyl-(R)-S-oxide-[F-actin] + NADP(+) + H2O. It catalyses the reaction NADPH + O2 + H(+) = H2O2 + NADP(+). Functionally, monooxygenase that promotes depolymerization of F-actin by mediating oxidation of specific methionine residues on actin to form methionine-sulfoxide, resulting in actin filament disassembly and preventing repolymerization. In the absence of actin, it also functions as a NADPH oxidase producing H(2)O(2). Acts as a cytoskeletal regulator that connects NEDD9 to intermediate filaments. Also acts as a negative regulator of apoptosis via its interaction with STK38 and STK38L; acts by antagonizing STK38 and STK38L activation by MST1/STK4. Involved in regulation of lamina-specific connectivity in the nervous system such as the development of lamina-restricted hippocampal connections. Through redox regulation of the actin cytoskeleton controls the intracellular distribution of secretory vesicles containing L1/neurofascin/NgCAM family proteins in neurons, thereby regulating their cell surface levels. May act as Rab effector protein and play a role in vesicle trafficking. Promotes endosomal tubule extension by associating with RAB8 (RAB8A or RAB8B), RAB10 and GRAF (GRAF1/ARHGAP26 or GRAF2/ARHGAP10) on the endosomal membrane which may connect GRAFs to Rabs, thereby participating in neosynthesized Rab8-Rab10-Rab11-dependent protein export. This Mus musculus (Mouse) protein is [F-actin]-monooxygenase MICAL1 (Mical1).